Here is a 521-residue protein sequence, read N- to C-terminus: CD166 antigen (521 aa).

Topologically, residues G1 to K465 are extracellular. N29, N33, N105, N203, N244, N299, N395, N418, and N437 each carry an N-linked (GlcNAc...) asparagine glycan. The region spanning P63 to H172 is the Ig-like V-type 2 domain. A disulfide bridge connects residues C95 and C158. Ig-like C2-type domains lie at P183–T266, D271–T347, and P354–S439. Cystine bridges form between C208/C251, C292/C330, and C373/C423. The chain crosses the membrane as a helical span at residues L466–L487. The Cytoplasmic portion of the chain corresponds to Y488–A521. The tract at residues N500–A521 is disordered. The segment covering E507–A521 has biased composition (basic and acidic residues).

Homodimer. Interacts (via extracellular domain) with CD6 (via extracellular domain). Homodimerization and interaction with CD6 involve the same region and cannot occur simultaneously. The affinity for CD6 is much higher than the affinity for self-association. Interacts (via glycosylated extracellular domain) with LGALS1 and LGALS3. Interaction with LGALS1 or LGALS3 inhibits interaction with CD6. Post-translationally, glycosylated.

It localises to the cell membrane. The protein resides in the cell projection. The protein localises to the axon. It is found in the dendrite. Functionally, cell adhesion molecule that mediates both heterotypic cell-cell contacts via its interaction with CD6, as well as homotypic cell-cell contacts. Promotes T-cell activation and proliferation via its interactions with CD6. Contributes to the formation and maturation of the immunological synapse via its interactions with CD6. Mediates homotypic interactions with cells that express ALCAM. Mediates attachment of dendritic cells onto endothelial cells via homotypic interaction. Inhibits endothelial cell migration and promotes endothelial tube formation via homotypic interactions. Required for normal organization of the lymph vessel network. Required for normal hematopoietic stem cell engraftment in the bone marrow. Plays a role in hematopoiesis; required for normal numbers of hematopoietic stem cells in bone marrow. Promotes in vitro osteoblast proliferation and differentiation. Promotes neurite extension, axon growth and axon guidance; axons grow preferentially on surfaces that contain ALCAM. Mediates outgrowth and pathfinding for retinal ganglion cell axons. In Oryctolagus cuniculus (Rabbit), this protein is CD166 antigen (ALCAM).